The primary structure comprises 256 residues: Protein FixA (256 aa).

The protein belongs to the ETF beta-subunit/FixA family. As to quaternary structure, heterodimer of FixA and FixB.

It functions in the pathway amine and polyamine metabolism; carnitine metabolism. Required for anaerobic carnitine reduction. May bring reductant to CaiA. This chain is Protein FixA, found in Escherichia coli O6:H1 (strain CFT073 / ATCC 700928 / UPEC).